A 609-amino-acid chain; its full sequence is Glutamine--fructose-6-phosphate aminotransferase [isomerizing] (609 aa).

Cys2 serves as the catalytic Nucleophile; for GATase activity. In terms of domain architecture, Glutamine amidotransferase type-2 spans 2–219 (CGIFGYLGNQ…SGEFAIVSQG (218 aa)). SIS domains lie at 285-426 (LSDV…VHGA) and 458-599 (WAQP…IDCP). Lys604 acts as the For Fru-6P isomerization activity in catalysis.

Homodimer.

The protein resides in the cytoplasm. It catalyses the reaction D-fructose 6-phosphate + L-glutamine = D-glucosamine 6-phosphate + L-glutamate. Its function is as follows. Catalyzes the first step in hexosamine metabolism, converting fructose-6P into glucosamine-6P using glutamine as a nitrogen source. The protein is Glutamine--fructose-6-phosphate aminotransferase [isomerizing] of Chlamydia pneumoniae (Chlamydophila pneumoniae).